The primary structure comprises 122 residues: Large ribosomal subunit protein uL14 (122 aa).

Belongs to the universal ribosomal protein uL14 family. As to quaternary structure, part of the 50S ribosomal subunit. Forms a cluster with proteins L3 and L19. In the 70S ribosome, L14 and L19 interact and together make contacts with the 16S rRNA in bridges B5 and B8.

Functionally, binds to 23S rRNA. Forms part of two intersubunit bridges in the 70S ribosome. This chain is Large ribosomal subunit protein uL14, found in Caulobacter sp. (strain K31).